The chain runs to 113 residues: U11-theraphotoxin-Hhn1a (113 aa).

Residues 1 to 21 form the signal peptide; it reads MNTVRVTFLLVFVLAVSLGQT. The propeptide occupies 22–74; sequence DKDENRMEMQEKTEQGKSYLDFAENLLLQKLEELEAKLLEEDSEESRNSRQKR. Cystine bridges form between Cys-75/Cys-90, Cys-82/Cys-95, and Cys-89/Cys-110.

Belongs to the neurotoxin 14 (magi-1) family. 01 (HNTX-16) subfamily. As to expression, expressed by the venom gland.

The protein resides in the secreted. Its function is as follows. Probable ion channel inhibitor. The protein is U11-theraphotoxin-Hhn1a of Cyriopagopus hainanus (Chinese bird spider).